Reading from the N-terminus, the 340-residue chain is MVTLRKRTLKVLTFLVLFIFLTSFFLNYSHTMVATTWFPKQMVLELSENLKRLIKHRPCTCTHCIGQRKLSAWFDERFNQTVQPLLTAQNALLEDDTYRWWLRLQREKKPNNLNDTIKELFRVVPGNVDPMLEKRSVGCRRCAVVGNSGNLRESSYGPEIDSHDFVLRMNKAPTAGFEADVGTKTTHHLVYPESFRELGDNVSMILVPFKTIDLEWVVSAITTGTISHTYTPVLVKIRVKQDKILIYHPAFIKYVFDNWLQGHGRYPSTGILSVIFSMHVCDEVDLYGFGADSKGNWHHYWENNPSAGAFRKTGVHDADFESNVTATLAAINKIRIFKGR.

Topologically, residues 1–13 (MVTLRKRTLKVLT) are cytoplasmic. Residues 14 to 34 (FLVLFIFLTSFFLNYSHTMVA) traverse the membrane as a helical; Signal-anchor for type II membrane protein segment. Residues 35 to 340 (TTWFPKQMVL…INKIRIFKGR (306 aa)) lie on the Lumenal side of the membrane. Disulfide bonds link cysteine 59-cysteine 64, cysteine 61-cysteine 139, and cysteine 142-cysteine 281. Residue asparagine 79 is glycosylated (N-linked (GlcNAc...) asparagine). Glutamine 105 is a binding site for substrate. The N-linked (GlcNAc...) asparagine glycan is linked to asparagine 114. 2 residues coordinate substrate: asparagine 147 and asparagine 170. Residue asparagine 201 is glycosylated (N-linked (GlcNAc...) asparagine). Substrate is bound by residues tyrosine 230, tyrosine 266, glycine 270, glycine 290, histidine 299, and histidine 316. A glycan (N-linked (GlcNAc...) asparagine) is linked at asparagine 323.

Belongs to the glycosyltransferase 29 family. The soluble form derives from the membrane form by proteolytic processing.

The protein resides in the golgi apparatus. It localises to the golgi stack membrane. Its subcellular location is the trans-Golgi network membrane. It is found in the secreted. The catalysed reaction is a beta-D-galactosyl-(1-&gt;3)-N-acetyl-alpha-D-galactosaminyl derivative + CMP-N-acetyl-beta-neuraminate = an N-acetyl-alpha-neuraminyl-(2-&gt;3)-beta-D-galactosyl-(1-&gt;3)-N-acetyl-alpha-D-galactosaminyl derivative + CMP + H(+). It catalyses the reaction a ganglioside GM1 + CMP-N-acetyl-beta-neuraminate = a ganglioside GD1a + CMP + H(+). The enzyme catalyses a ganglioside GM1 (d18:1(4E)) + CMP-N-acetyl-beta-neuraminate = a ganglioside GD1a (d18:1(4E)) + CMP + H(+). It carries out the reaction ganglioside GM1 (d18:1(4E)/18:0) + CMP-N-acetyl-beta-neuraminate = ganglioside GD1a (18:1(4E)/18:0) + CMP + H(+). The catalysed reaction is a ganglioside GA1 + CMP-N-acetyl-beta-neuraminate = a ganglioside GM1b + CMP + H(+). It catalyses the reaction a ganglioside GA1 (d18:1(4E)) + CMP-N-acetyl-beta-neuraminate = a ganglioside GM1b (d18:1(4E)) + CMP + H(+). The enzyme catalyses a ganglioside GD1b + CMP-N-acetyl-beta-neuraminate = a ganglioside GT1b + CMP + H(+). It carries out the reaction a 3-O-[beta-D-galactosyl-(1-&gt;3)-N-acetyl-alpha-D-galactosaminyl]-L-threonyl-[protein] + CMP-N-acetyl-beta-neuraminate = a 3-O-[N-acetyl-alpha-neuraminyl-(2-&gt;3)-beta-D-galactosyl-(1-&gt;3)-N-acetyl-alpha-D-galactosaminyl]-L-threonyl-[protein] + CMP + H(+). The catalysed reaction is a 3-O-[beta-D-galactosyl-(1-&gt;3)-N-acetyl-alpha-D-galactosaminyl]-L-seryl-[protein] + CMP-N-acetyl-beta-neuraminate = 3-O-[N-acetyl-alpha-neuraminyl-(2-&gt;3)-beta-D-galactosyl-(1-&gt;3)-N-acetyl-alpha-D-galactosaminyl]-L-seryl-[protein] + CMP + H(+). It participates in protein modification; protein glycosylation. The protein operates within glycolipid biosynthesis. A beta-galactoside alpha2-&gt;3 sialyltransferase involved in terminal sialylation of glycoproteins and glycolipids. Catalyzes the transfer of sialic acid (N-acetyl-neuraminic acid; Neu5Ac) from the nucleotide sugar donor CMP-Neu5Ac onto acceptor Galbeta-(1-&gt;3)-GalNAc-terminated glycoconjugates through an alpha2-3 linkage. Adds sialic acid to the core 1 O-glycan, Galbeta-(1-&gt;3)-GalNAc-O-Ser/Thr, which is a major structure of mucin-type O-glycans. As part of a homeostatic mechanism that regulates CD8-positive T cell numbers, sialylates core 1 O-glycans of T cell glycoproteins, SPN/CD43 and PTPRC/CD45. Prevents premature apoptosis of thymic CD8-positive T cells prior to peripheral emigration, whereas in the secondary lymphoid organs controls the survival of CD8-positive memory T cells generated following a successful immune response. Transfers sialic acid to asialofetuin, presumably onto Galbeta-(1-&gt;3)-GalNAc-O-Ser. Sialylates GM1a, GA1 and GD1b gangliosides to form GD1a, GM1b and GT1b, respectively. This is CMP-N-acetylneuraminate-beta-galactosamide-alpha-2,3-sialyltransferase 1 (ST3GAL1) from Pan troglodytes (Chimpanzee).